The primary structure comprises 2528 residues: Reducing polyketide synthase PKS1 (2528 aa).

Positions 11–436 (ITPIAVVGMS…GANVHAILES (426 aa)) constitute a Ketosynthase family 3 (KS3) domain. Residues C186, H321, and H359 each act as for beta-ketoacyl synthase activity in the active site. Positions 573–868 (FVFTGQGAQW…LGGPISQVID (296 aa)) are malonyl-CoA:ACP transacylase (MAT). The N-terminal hotdog fold stretch occupies residues 954-1092 (LDLIGVFDVH…GLISVLKSSK (139 aa)). Positions 954 to 1278 (LDLIGVFDVH…LVALDRPNSS (325 aa)) constitute a PKS/mFAS DH domain. The interval 956–1277 (LIGVFDVHSS…TLVALDRPNS (322 aa)) is dehydratase (DH) domain. H986 (proton acceptor; for dehydratase activity) is an active-site residue. A C-terminal hotdog fold region spans residues 1122–1278 (KTEWDVKDMY…LVALDRPNSS (157 aa)). The active-site Proton donor; for dehydratase activity is D1187. The segment at 1827–2139 (GLLDSLHFTV…TGRHMGKMVA (313 aa)) is enoyl reductase (ER) domain. Positions 2164–2341 (ASYLLVGGVG…ATVIDIGAVH (178 aa)) are ketoreductase (KR) domain. The region spanning 2442–2519 (SAVTIVLSAL…ALAVKIAARS (78 aa)) is the Carrier domain. S2479 carries the O-(pantetheine 4'-phosphoryl)serine modification.

Its pathway is mycotoxin biosynthesis. In terms of biological role, reducing polyketide synthase (PKS); part of the Tox1A locus, one of the 2 loci that mediate the biosynthesis of T-toxin, a family of linear polyketides 37 to 45 carbons in length, of which the major component is 41 carbons, and which leads to high virulence to maize. One of the PKSs (PKS1 or PKS2) could synthesize a precursor, used subsequently by the other PKS as starter unit, to add additional carbons. Variability in the length of the final carbon backbone C35-47 could be achieved by varying the number of condensation cycles, or use of different starter or extender units or might be due to decarboxylation of the penultimate product, catalyzed by DEC1. Additional proteins are required for the biosynthesis of T-toxin, including oxidoreductases RED1, RED2, RED3, LAM1 and OXI1, as well as esterase TOX9. The sequence is that of Reducing polyketide synthase PKS1 from Cochliobolus heterostrophus (strain C4 / ATCC 48331 / race T) (Southern corn leaf blight fungus).